Consider the following 465-residue polypeptide: tRNA-2-methylthio-N(6)-dimethylallyladenosine synthase (465 aa).

Positions 5–125 constitute an MTTase N-terminal domain; the sequence is RKLHIKSYGC…LPELLKRAGN (121 aa). Residues cysteine 14, cysteine 50, cysteine 88, cysteine 166, cysteine 170, and cysteine 173 each coordinate [4Fe-4S] cluster. The region spanning 152–384 is the Radical SAM core domain; sequence RARGISAFVT…QELIDSQQSA (233 aa). One can recognise a TRAM domain in the interval 387-449; sequence KAAIGSTVDV…RYSFLGELVT (63 aa).

Belongs to the methylthiotransferase family. MiaB subfamily. As to quaternary structure, monomer. [4Fe-4S] cluster is required as a cofactor.

Its subcellular location is the cytoplasm. The catalysed reaction is N(6)-dimethylallyladenosine(37) in tRNA + (sulfur carrier)-SH + AH2 + 2 S-adenosyl-L-methionine = 2-methylsulfanyl-N(6)-dimethylallyladenosine(37) in tRNA + (sulfur carrier)-H + 5'-deoxyadenosine + L-methionine + A + S-adenosyl-L-homocysteine + 2 H(+). Functionally, catalyzes the methylthiolation of N6-(dimethylallyl)adenosine (i(6)A), leading to the formation of 2-methylthio-N6-(dimethylallyl)adenosine (ms(2)i(6)A) at position 37 in tRNAs that read codons beginning with uridine. In Bradyrhizobium diazoefficiens (strain JCM 10833 / BCRC 13528 / IAM 13628 / NBRC 14792 / USDA 110), this protein is tRNA-2-methylthio-N(6)-dimethylallyladenosine synthase.